The chain runs to 423 residues: Serine--tRNA ligase (423 aa).

Thr230–Glu232 contacts L-serine. Arg261–Glu263 provides a ligand contact to ATP. Residue Glu284 coordinates L-serine. Glu348–Ser351 lines the ATP pocket. Ser384 provides a ligand contact to L-serine.

This sequence belongs to the class-II aminoacyl-tRNA synthetase family. Type-1 seryl-tRNA synthetase subfamily. Homodimer. The tRNA molecule binds across the dimer.

It is found in the cytoplasm. The enzyme catalyses tRNA(Ser) + L-serine + ATP = L-seryl-tRNA(Ser) + AMP + diphosphate + H(+). The catalysed reaction is tRNA(Sec) + L-serine + ATP = L-seryl-tRNA(Sec) + AMP + diphosphate + H(+). It functions in the pathway aminoacyl-tRNA biosynthesis; selenocysteinyl-tRNA(Sec) biosynthesis; L-seryl-tRNA(Sec) from L-serine and tRNA(Sec): step 1/1. Functionally, catalyzes the attachment of serine to tRNA(Ser). Is also able to aminoacylate tRNA(Sec) with serine, to form the misacylated tRNA L-seryl-tRNA(Sec), which will be further converted into selenocysteinyl-tRNA(Sec). This Macrococcus caseolyticus (strain JCSC5402) (Macrococcoides caseolyticum) protein is Serine--tRNA ligase.